We begin with the raw amino-acid sequence, 392 residues long: Formate-dependent phosphoribosylglycinamide formyltransferase (392 aa).

N(1)-(5-phospho-beta-D-ribosyl)glycinamide contacts are provided by residues E20 to L21 and E80. ATP-binding positions include R112, K153, S158–Q163, E193–I196, and E201. The ATP-grasp domain maps to R117–L306. Mg(2+) contacts are provided by E265 and E277. Residues D284, K354, and R361–R362 contribute to the N(1)-(5-phospho-beta-D-ribosyl)glycinamide site.

This sequence belongs to the PurK/PurT family. Homodimer.

It carries out the reaction N(1)-(5-phospho-beta-D-ribosyl)glycinamide + formate + ATP = N(2)-formyl-N(1)-(5-phospho-beta-D-ribosyl)glycinamide + ADP + phosphate + H(+). The protein operates within purine metabolism; IMP biosynthesis via de novo pathway; N(2)-formyl-N(1)-(5-phospho-D-ribosyl)glycinamide from N(1)-(5-phospho-D-ribosyl)glycinamide (formate route): step 1/1. Its function is as follows. Involved in the de novo purine biosynthesis. Catalyzes the transfer of formate to 5-phospho-ribosyl-glycinamide (GAR), producing 5-phospho-ribosyl-N-formylglycinamide (FGAR). Formate is provided by PurU via hydrolysis of 10-formyl-tetrahydrofolate. The sequence is that of Formate-dependent phosphoribosylglycinamide formyltransferase from Geobacter metallireducens (strain ATCC 53774 / DSM 7210 / GS-15).